A 407-amino-acid chain; its full sequence is Probable succinyl-diaminopimelate desuccinylase (407 aa).

Position 72 (histidine 72) interacts with Zn(2+). Aspartate 74 is a catalytic residue. Aspartate 105 provides a ligand contact to Zn(2+). The Proton acceptor role is filled by glutamate 139. 3 residues coordinate Zn(2+): glutamate 140, glutamate 165, and histidine 378.

It belongs to the peptidase M20A family. The cofactor is Zn(2+). Requires Co(2+) as cofactor.

It carries out the reaction N-succinyl-(2S,6S)-2,6-diaminopimelate + H2O = (2S,6S)-2,6-diaminopimelate + succinate. It participates in amino-acid biosynthesis; L-lysine biosynthesis via DAP pathway; LL-2,6-diaminopimelate from (S)-tetrahydrodipicolinate (succinylase route): step 3/3. This chain is Probable succinyl-diaminopimelate desuccinylase (dapE), found in Staphylococcus aureus (strain N315).